The following is a 556-amino-acid chain: Probable Xaa-Pro aminopeptidase SS1G_06948 (556 aa).

Mn(2+) contacts are provided by aspartate 305, aspartate 316, glutamate 460, and glutamate 501.

The protein belongs to the peptidase M24B family. The cofactor is Mn(2+).

The enzyme catalyses Release of any N-terminal amino acid, including proline, that is linked to proline, even from a dipeptide or tripeptide.. Its function is as follows. Catalyzes the removal of a penultimate prolyl residue from the N-termini of peptides. The protein is Probable Xaa-Pro aminopeptidase SS1G_06948 of Sclerotinia sclerotiorum (strain ATCC 18683 / 1980 / Ss-1) (White mold).